The following is a 535-amino-acid chain: Glucose-6-phosphate isomerase (535 aa).

Glu-347 functions as the Proton donor in the catalytic mechanism. Catalysis depends on residues His-378 and Lys-493.

The protein belongs to the GPI family.

Its subcellular location is the cytoplasm. The enzyme catalyses alpha-D-glucose 6-phosphate = beta-D-fructose 6-phosphate. The protein operates within carbohydrate biosynthesis; gluconeogenesis. It functions in the pathway carbohydrate degradation; glycolysis; D-glyceraldehyde 3-phosphate and glycerone phosphate from D-glucose: step 2/4. Its function is as follows. Catalyzes the reversible isomerization of glucose-6-phosphate to fructose-6-phosphate. The polypeptide is Glucose-6-phosphate isomerase (Chlamydia felis (strain Fe/C-56) (Chlamydophila felis)).